The chain runs to 229 residues: tRNA (guanine-N(7)-)-methyltransferase (229 aa).

Positions 62, 87, 114, and 137 each coordinate S-adenosyl-L-methionine. Asp-137 is a catalytic residue. Substrate is bound at residue Lys-141. The tract at residues 143 to 148 (KHNKRR) is interaction with RNA. Substrate is bound by residues Asp-173 and 208 to 211 (TKFE).

This sequence belongs to the class I-like SAM-binding methyltransferase superfamily. TrmB family.

The catalysed reaction is guanosine(46) in tRNA + S-adenosyl-L-methionine = N(7)-methylguanosine(46) in tRNA + S-adenosyl-L-homocysteine. Its pathway is tRNA modification; N(7)-methylguanine-tRNA biosynthesis. Functionally, catalyzes the formation of N(7)-methylguanine at position 46 (m7G46) in tRNA. This chain is tRNA (guanine-N(7)-)-methyltransferase, found in Francisella tularensis subsp. novicida (strain U112).